We begin with the raw amino-acid sequence, 282 residues long: MKKFVGAHVSASGGVRNAPLNAQKIGAKAFALFTKNQRQWSAKALEEEEIEQFKANLKAAGIAPSCVLPHDSYLINLGHPGEAELAKSREAFLDEMRRCEQLGLDRLNFHPGSHLGAISESECLSRVAESINLALEATSGVIAVIENTAGQGSNVGYDFRHLGEIIDQVHDKSRVGICIDTCHMFSAGYDIRTREAYEASMAILDREVGWCYLKGMHLNDSKVKFQSRVDRHHSLGMGELGIAPFEFIMNDPRMDGIPLILETIDEALWAQEITLLYSLIKE.

The Zn(2+) site is built by histidine 70, histidine 110, glutamate 146, aspartate 180, histidine 183, histidine 217, aspartate 230, histidine 232, and glutamate 262.

This sequence belongs to the AP endonuclease 2 family. The cofactor is Zn(2+).

The enzyme catalyses Endonucleolytic cleavage to 5'-phosphooligonucleotide end-products.. Functionally, endonuclease IV plays a role in DNA repair. It cleaves phosphodiester bonds at apurinic or apyrimidinic (AP) sites, generating a 3'-hydroxyl group and a 5'-terminal sugar phosphate. This Wolinella succinogenes (strain ATCC 29543 / DSM 1740 / CCUG 13145 / JCM 31913 / LMG 7466 / NCTC 11488 / FDC 602W) (Vibrio succinogenes) protein is Probable endonuclease 4.